A 209-amino-acid chain; its full sequence is Thymidine kinase (209 aa).

Residues 16 to 23 (GPMFAGKT) and 90 to 93 (DEAQ) each bind ATP. Catalysis depends on E91, which acts as the Proton acceptor.

It belongs to the thymidine kinase family. Homotetramer.

Its subcellular location is the cytoplasm. The enzyme catalyses thymidine + ATP = dTMP + ADP + H(+). The polypeptide is Thymidine kinase (Onion yellows phytoplasma (strain OY-M)).